Consider the following 301-residue polypeptide: Phosphatidylglycerol--prolipoprotein diacylglyceryl transferase (301 aa).

4 consecutive transmembrane segments (helical) span residues 10-30 (IAFS…LAGF), 57-77 (LLFY…MLFY), 92-112 (VWEG…AVAW), and 119-139 (MHMF…LGFG). Residue arginine 140 coordinates a 1,2-diacyl-sn-glycero-3-phospho-(1'-sn-glycerol). Transmembrane regions (helical) follow at residues 202–222 (PSQL…LWLF), 230–250 (YAVS…VEFV), and 264–284 (LTRG…LFWL).

This sequence belongs to the Lgt family.

Its subcellular location is the cell inner membrane. The enzyme catalyses L-cysteinyl-[prolipoprotein] + a 1,2-diacyl-sn-glycero-3-phospho-(1'-sn-glycerol) = an S-1,2-diacyl-sn-glyceryl-L-cysteinyl-[prolipoprotein] + sn-glycerol 1-phosphate + H(+). The protein operates within protein modification; lipoprotein biosynthesis (diacylglyceryl transfer). Functionally, catalyzes the transfer of the diacylglyceryl group from phosphatidylglycerol to the sulfhydryl group of the N-terminal cysteine of a prolipoprotein, the first step in the formation of mature lipoproteins. This Xylella fastidiosa (strain M12) protein is Phosphatidylglycerol--prolipoprotein diacylglyceryl transferase.